A 164-amino-acid polypeptide reads, in one-letter code: Endoribonuclease YbeY (164 aa).

3 residues coordinate Zn(2+): histidine 132, histidine 136, and histidine 142.

Belongs to the endoribonuclease YbeY family. It depends on Zn(2+) as a cofactor.

The protein localises to the cytoplasm. Its function is as follows. Single strand-specific metallo-endoribonuclease involved in late-stage 70S ribosome quality control and in maturation of the 3' terminus of the 16S rRNA. The protein is Endoribonuclease YbeY of Clostridium kluyveri (strain NBRC 12016).